A 517-amino-acid polypeptide reads, in one-letter code: Probable bifunctional methylthioribulose-1-phosphate dehydratase/enolase-phosphatase E1 (517 aa).

Residues 1-242 (MACGGCSCEA…CIKLYQLGID (242 aa)) form a methylthioribulose-1-phosphate dehydratase region. Cys-114 is a binding site for substrate. Zn(2+) contacts are provided by His-132 and His-134. The active-site Proton donor/acceptor; for methylthioribulose-1-phosphate dehydratase activity is Glu-157. A Zn(2+)-binding site is contributed by His-207. The tract at residues 278-517 (VVLDIEGTTT…FRTIKSFSEI (240 aa)) is enolase-phosphatase E1. Residues Asp-281 and Glu-283 each contribute to the Mg(2+) site. Substrate-binding positions include 416 to 417 (SS) and Lys-450. Asp-476 is a binding site for Mg(2+).

This sequence in the N-terminal section; belongs to the aldolase class II family. MtnB subfamily. It in the C-terminal section; belongs to the HAD-like hydrolase superfamily. MasA/MtnC family. It depends on Zn(2+) as a cofactor. Mg(2+) is required as a cofactor.

The catalysed reaction is 5-(methylsulfanyl)-D-ribulose 1-phosphate = 5-methylsulfanyl-2,3-dioxopentyl phosphate + H2O. It catalyses the reaction 5-methylsulfanyl-2,3-dioxopentyl phosphate + H2O = 1,2-dihydroxy-5-(methylsulfanyl)pent-1-en-3-one + phosphate. It functions in the pathway amino-acid biosynthesis; L-methionine biosynthesis via salvage pathway; L-methionine from S-methyl-5-thio-alpha-D-ribose 1-phosphate: step 2/6. It participates in amino-acid biosynthesis; L-methionine biosynthesis via salvage pathway; L-methionine from S-methyl-5-thio-alpha-D-ribose 1-phosphate: step 3/6. Its pathway is amino-acid biosynthesis; L-methionine biosynthesis via salvage pathway; L-methionine from S-methyl-5-thio-alpha-D-ribose 1-phosphate: step 4/6. This Sorghum bicolor (Sorghum) protein is Probable bifunctional methylthioribulose-1-phosphate dehydratase/enolase-phosphatase E1.